We begin with the raw amino-acid sequence, 252 residues long: Protein Flattop homolog (252 aa).

The segment at 177–252 (TEKRRRKRTI…EKERKAAKGH (76 aa)) is disordered. Positions 218–252 (PKDKPKDKPKDKEAGKKDKTKDKGKEKERKAAKGH) are enriched in basic and acidic residues.

Belongs to the Flattop family.

This Drosophila melanogaster (Fruit fly) protein is Protein Flattop homolog.